A 559-amino-acid polypeptide reads, in one-letter code: Putative helicase 22 (559 aa).

One can recognise a Helicase ATP-binding domain in the interval 186-347 (VSDVNVIGNG…EIMGLLGKIS (162 aa)). 199–206 (APTGSGKS) contributes to the ATP binding site. The short motif at 300–303 (DEAH) is the DEAH box element. A Helicase C-terminal domain is found at 410–552 (TNKQIISKIK…KMNFIENEYN (143 aa)).

The polypeptide is Putative helicase 22 (SIFV0022) (Sulfolobus islandicus filamentous virus (isolate Iceland/Hveragerdi) (SIFV)).